We begin with the raw amino-acid sequence, 342 residues long: Glycerol-3-phosphate dehydrogenase [NAD(P)+] (342 aa).

Residues Trp11, Arg33, and Lys107 each contribute to the NADPH site. The sn-glycerol 3-phosphate site is built by Lys107, Gly143, and Ser145. Ala147 contributes to the NADPH binding site. Sn-glycerol 3-phosphate-binding residues include Lys198, Asp251, Ser261, Arg262, and Asn263. Lys198 (proton acceptor) is an active-site residue. NADPH is bound at residue Arg262. 2 residues coordinate NADPH: Val286 and Glu288.

It belongs to the NAD-dependent glycerol-3-phosphate dehydrogenase family.

The protein localises to the cytoplasm. The catalysed reaction is sn-glycerol 3-phosphate + NAD(+) = dihydroxyacetone phosphate + NADH + H(+). It catalyses the reaction sn-glycerol 3-phosphate + NADP(+) = dihydroxyacetone phosphate + NADPH + H(+). Its pathway is membrane lipid metabolism; glycerophospholipid metabolism. Catalyzes the reduction of the glycolytic intermediate dihydroxyacetone phosphate (DHAP) to sn-glycerol 3-phosphate (G3P), the key precursor for phospholipid synthesis. The sequence is that of Glycerol-3-phosphate dehydrogenase [NAD(P)+] from Paracidovorax citrulli (strain AAC00-1) (Acidovorax citrulli).